The primary structure comprises 354 residues: Guanine nucleotide-binding protein G(t) subunit alpha-3 (354 aa).

A disordered region spans residues 1-27; the sequence is MGSGISSESKESAKRSKELEKKLQEDA. Glycine 2 carries N-myristoyl glycine lipidation. The span at 8–27 shows a compositional bias: basic and acidic residues; sequence ESKESAKRSKELEKKLQEDA. The G-alpha domain occupies 32–354; sequence RTVKLLLLGA…KENLKDCGLF (323 aa). The G1 motif stretch occupies residues 35-48; the sequence is KLLLLGAGESGKST. Residues 40–47, 175–181, 200–204, 269–272, and alanine 326 contribute to the GTP site; these read GAGESGKS, LHSRVKT, DVGGQ, and NKKD. Serine 47 and threonine 181 together coordinate Mg(2+). The segment at 173 to 181 is G2 motif; it reads DVLHSRVKT. The tract at residues 196 to 205 is G3 motif; sequence FRMFDVGGQR. The tract at residues 265–272 is G4 motif; sequence VLFLNKKD. Residues 324–329 form a G5 motif region; sequence TCATDT.

This sequence belongs to the G-alpha family. G(i/o/t/z) subfamily. G proteins are composed of 3 units; alpha, beta and gamma, respectively GNAT3, GNB1 and GNG13 for Gustducin heterotrimer for bitter taste transduction. The alpha chain contains the guanine nucleotide binding site. Component of the TAS2R14-GNAT3 complex, consisting of TAS2R14, GNAT3, GNB1 and GNG2; within the complex interacts with TAS2R14; this complex plays a role in the perception of bitterness. Gustducin heterotrimer may also be composed of GNAT3, GNB3 and GNG13. Post-translationally, potential N-myristoylation may anchor alpha-subunit to the inner surface of plasma membrane. As to expression, expressed in taste buds (sensory organs of clustered epithelial cells) of the circumvallate, foliate and fungiform papillae of the tongue, as well as in nasoincisor, palatal and epiglottal taste buds at protein level. Expressed in enteroendocrine of the gut, in the lumenal pole of a subset of brush cells lining the stomach and the intestine at protein level. Detected in solitary cells throughout the respiratory track. Expressed also in spermatozoa.

It is found in the cytoplasm. Its function is as follows. Guanine nucleotide-binding protein (G protein) alpha subunit playing a prominent role in bitter and sweet taste transduction as well as in umami (monosodium glutamate, monopotassium glutamate, and inosine monophosphate) taste transduction. Transduction by this alpha subunit involves coupling of specific cell-surface receptors with a cGMP-phosphodiesterase; Activation of phosphodiesterase lowers intracellular levels of cAMP and cGMP which may open a cyclic nucleotide-suppressible cation channel leading to influx of calcium, ultimately leading to release of neurotransmitter. Indeed, denatonium and strychnine induce transient reduction in cAMP and cGMP in taste tissue, whereas this decrease is inhibited by GNAT3 antibody. Gustducin heterotrimer transduces response to bitter and sweet compounds via regulation of phosphodiesterase for alpha subunit, as well as via activation of phospholipase C for beta and gamma subunits, with ultimate increase inositol trisphosphate and increase of intracellular Calcium. GNAT3 can functionally couple to taste receptors to transmit intracellular signal: receptor heterodimer TAS1R2/TAS1R3 senses sweetness and TAS1R1/TAS1R3 transduces umami taste, whereas the T2R family GPCRs act as bitter sensors. Also functions as lumenal sugar sensors in the gut to control the expression of the Na+-glucose transporter SGLT1 in response to dietaty sugar, as well as the secretion of Glucagon-like peptide-1, GLP-1 and glucose-dependent insulinotropic polypeptide, GIP. Thus, may modulate the gut capacity to absorb sugars, with implications for the prevention and treatment of malabsorption syndromes and diet-related disorders including diabetes and obesity. The protein is Guanine nucleotide-binding protein G(t) subunit alpha-3 (Gnat3) of Rattus norvegicus (Rat).